Reading from the N-terminus, the 450-residue chain is Vacuolar cation/proton exchanger 1c (450 aa).

Residues 1 to 73 are Cytoplasmic-facing; sequence MAPPESSHHH…LLGGPAAQLQ (73 aa). The disordered stretch occupies residues 28-52; it reads AAEEEEKKEAAAWTPSSSSSMTGRK. A helical transmembrane segment spans residues 74–94; that stretch reads EVLLGTKLYPLFSAVPLAVAA. The Extracellular portion of the chain corresponds to 95-101; the sequence is ESLRLGR. The chain crosses the membrane as a helical span at residues 102–122; it reads VWVFAFSLIGLAPLAERVSFL. Topologically, residues 123–134 are cytoplasmic; it reads SEHIANTVGPTA. The chain crosses the membrane as a helical span at residues 135 to 155; the sequence is GGIMNATCGNVPELIIALFAL. The tract at residues 143–178 is cation selection; that stretch reads GNVPELIIALFALHKNKMEILKWSLLGSILSNLLLV. Residues 156 to 170 lie on the Extracellular side of the membrane; it reads HKNKMEILKWSLLGS. Residues 171–191 traverse the membrane as a helical segment; that stretch reads ILSNLLLVLGSSLLFGGIVNI. At 192–201 the chain is on the cytoplasmic side; that stretch reads GKERPLDKRQ. A helical transmembrane segment spans residues 202 to 222; the sequence is ADVSIGLLLLGVLCHIATLVS. Over 223-239 the chain is Extracellular; the sequence is KYTSSTGDSINSSSVMQ. The chain crosses the membrane as a helical span at residues 240–260; the sequence is LSRSCAIVMLIAYFGSLMFQL. The Cytoplasmic portion of the chain corresponds to 261 to 287; sequence KTHRQIFELEEDSSDSSSSEDDATDKS. The helical transmembrane segment at 288–308 threads the bilayer; it reads VIGFASAMVWLIGMAVVTAML. Topologically, residues 309 to 331 are extracellular; that stretch reads SSYVVTTIEEASESMGIPVRFIS. The chain crosses the membrane as a helical span at residues 332–352; it reads IILLPIVGNAAEHAGAIIFAF. The interval 339-374 is cation selection; sequence GNAAEHAGAIIFAFKNKIDISLGITLGSATQISMLV. At 353-360 the chain is on the cytoplasmic side; sequence KNKIDISL. A helical transmembrane segment spans residues 361–381; sequence GITLGSATQISMLVVPVILIV. At 382-385 the chain is on the extracellular side; it reads SWVN. Residues 386-406 form a helical membrane-spanning segment; that stretch reads AIPMDLDFNLLETGSLAMAVI. Topologically, residues 407 to 424 are cytoplasmic; sequence TTAFTLQDDKWHYLKGLN. The helical transmembrane segment at 425–445 threads the bilayer; it reads LVFSYIVIAVCFFVMKALPTL. Over 446–450 the chain is Extracellular; that stretch reads KKEDD.

This sequence belongs to the Ca(2+):cation antiporter (CaCA) (TC 2.A.19) family. Cation/proton exchanger (CAX) subfamily. As to expression, expressed in leaf blades.

The protein resides in the vacuole membrane. Functionally, vacuolar cation/proton exchanger (CAX). Translocates Ca(2+) and other metal ions into vacuoles using the proton gradient formed by H(+)-ATPase and H(+)-pyrophosphatase. The polypeptide is Vacuolar cation/proton exchanger 1c (CAX1c) (Oryza sativa subsp. japonica (Rice)).